A 193-amino-acid chain; its full sequence is MTEFLLLLIGTVLVNNFVLVQFLGLCPFMGVSGKLETAIGMSMATTFVLTLASLSSYLVEHYILLPLGIEYLRTLSFILVIAVVVQFTEMVVHKTSPTLYRLLGIFLPLITTNCAVLGVALLNINHDHNFIESVIYGFGAAVGFSLVLILFAAMRERLAVADVPAPFKGASISMITAGLMSLAFLGFTGLVKF.

Helical transmembrane passes span 4 to 24 (FLLL…QFLG), 39 to 59 (IGMS…SYLV), 63 to 83 (ILLP…VIAV), 102 to 122 (LLGI…VALL), 134 to 154 (VIYG…FAAM), and 171 to 191 (SISM…TGLV).

It belongs to the NqrDE/RnfAE family. In terms of assembly, the complex is composed of six subunits: RnfA, RnfB, RnfC, RnfD, RnfE and RnfG.

Its subcellular location is the cell inner membrane. Its function is as follows. Part of a membrane-bound complex that couples electron transfer with translocation of ions across the membrane. The chain is Ion-translocating oxidoreductase complex subunit A from Pseudoalteromonas atlantica (strain T6c / ATCC BAA-1087).